Reading from the N-terminus, the 70-residue chain is UPF0434 protein MCA0634 (70 aa).

The protein belongs to the UPF0434 family.

The protein is UPF0434 protein MCA0634 of Methylococcus capsulatus (strain ATCC 33009 / NCIMB 11132 / Bath).